The sequence spans 783 residues: Cyclic di-GMP phosphodiesterase NbdA (783 aa).

The MHYT domain maps to 81–274 (YSPSLVALAF…FTGMAALVLS (194 aa)). 7 consecutive transmembrane segments (helical) span residues 84 to 104 (SLVALAFLVACLAGYTALDMV), 120 to 140 (IGAFCLGSGIWATHFVAMLAF), 150 to 170 (LPITGLSLLIAVAASYLTMYM), 176 to 196 (FGLLPCLLAACCIGLGIAAMH), 215 to 235 (LFALSVLIAIGAAFTALAAVP), 255 to 275 (LLAGAIAAMHFTGMAALVLSV), and 292 to 312 (LGWLTGVLASAIAACGIWAAW). Residues 313 to 783 (SEKQRERRLS…APPLRSLNQA (471 aa)) lie on the Cytoplasmic side of the membrane. The region spanning 375-507 (KGLAVMFLDL…GRNNAQFFSR (133 aa)) is the GGDEF domain. In terms of domain architecture, EAL spans 516 to 770 (ELQMEEELRQ…ALEEFLRAYR (255 aa)). Residues Q537, E551, R555, N610, and N615 each contribute to the 3',3'-c-di-GMP site. E551 is a binding site for Mg(2+). N610 provides a ligand contact to Mg(2+). Residues E642, D672, and D673 each coordinate Mg(2+). D672 provides a ligand contact to 3',3'-c-di-GMP. R696 contacts 3',3'-c-di-GMP. E729 contacts Mg(2+). 3',3'-c-di-GMP is bound by residues E732 and Y751.

It depends on Mg(2+) as a cofactor.

Its subcellular location is the cell inner membrane. It carries out the reaction 3',3'-c-di-GMP + H2O = 5'-phosphoguanylyl(3'-&gt;5')guanosine + H(+). PDE activity is stimulated by GTP. It could also be stimulated by NO. Functionally, displays c-di-GMP-specific phosphodiesterase (PDE) activity. Seems to play a specific role in nitric oxide (NO)-induced biofilm dispersion. Enhanced NbdA synthesis in the presence of NO increases PDE activity, leading to reduced cellular c-di-GMP levels and biofilm dispersion. Does not show diguanylate cyclase (DGC) activity. This is Cyclic di-GMP phosphodiesterase NbdA from Pseudomonas aeruginosa (strain ATCC 15692 / DSM 22644 / CIP 104116 / JCM 14847 / LMG 12228 / 1C / PRS 101 / PAO1).